The following is a 274-amino-acid chain: E3 ubiquitin-protein ligase complex SLX5-SLX8 subunit SLX8 (274 aa).

2 disordered regions span residues 1 to 117 (MARR…GNNI) and 136 to 159 (ANTP…TNSK). Residues 13–28 (ENLRIKRVRLESVRQN) are compositionally biased toward basic and acidic residues. Ser50 carries the post-translational modification Phosphoserine. Thr66 is modified (phosphothreonine). Over residues 66-75 (TSEEDGDDDL) the composition is skewed to acidic residues. Ser67 carries the post-translational modification Phosphoserine. Residues 97–108 (GNHDRETMHTEE) are compositionally biased toward basic and acidic residues. An RING-type zinc finger spans residues 206-250 (CPICFEPPETALMTLCGHVFCCPCLFQMVNSSRTCRQFGHCALCR).

Component of the heterodimeric SUMO-targeted ubiquitin ligase (STUbL) complex composed of SLX5 and SLX8.

It localises to the nucleus. The protein localises to the chromosome. The protein resides in the centromere. It is found in the kinetochore. The enzyme catalyses S-ubiquitinyl-[E2 ubiquitin-conjugating enzyme]-L-cysteine + [acceptor protein]-L-lysine = [E2 ubiquitin-conjugating enzyme]-L-cysteine + N(6)-ubiquitinyl-[acceptor protein]-L-lysine.. It functions in the pathway protein modification; protein ubiquitination. Component of the SUMO-targeted ubiquitin ligase (STUbL) complex SLX5/SLX8 that mediates ubiquitination and subsequent desumoylation of sumoylated proteins and proteins containing SUMO-like domains for their degradation. The STUbL complex SLX5/SLX8 stimulates ubiquitin conjugating enzymes, including UBC1, UBC4, UBC5 and UBC13-MMS2, and mediates the proteolytic down-regulation of sumoylated proteins. The STUbL complex SLX5/SLX8 is involved in ubiquitin-mediated degradation of histone variant CSE4, preventing mislocalization to euchromatin. The complex plays an essential role in maintenance of chromosome stability and links SUMO-dependent ubiquitination to a centromere-specific function during mitosis. The complex is involved in proteolysis of spindle positioning protein KAR9 and ensures correct spindle function by regulating levels of microtubule-associated proteins. During replication, the complex helps to prevent DNA lesions via recombination and has a role in localizing the DNA damage protein DCD2. The complex especially ubiquitinates the nuclease YEN1 and prevents persistent accumulation of a fraction of YEN1 associated with sites of activity in late G2/M and helps maintain the balance between pro- and anti-crossover pathways during homologous recombination. It is also involved in ubiquitin-mediated degradation of DNA repair proteins RAD52 and RAD57. Finally, the complex is recruited to distinct genomic hotspots of non-H2B protein ubiquitination (ub-hotspots) by the sumoylated transcription factor-like protein EUC1 where it ubiquitinates EUC1 and presumably other targets. The chain is E3 ubiquitin-protein ligase complex SLX5-SLX8 subunit SLX8 (SLX8) from Saccharomyces cerevisiae (strain ATCC 204508 / S288c) (Baker's yeast).